A 416-amino-acid polypeptide reads, in one-letter code: Lipoyl synthase, mitochondrial (416 aa).

The N-terminal 33 residues, 1 to 33 (MAAPTRSLRRLSSFRTTISPSLTVTAPIGCRSY), are a transit peptide targeting the mitochondrion. 7 residues coordinate [4Fe-4S] cluster: Cys-132, Cys-137, Cys-143, Cys-163, Cys-167, Cys-170, and Ser-378. Residues 148-367 (DKSSATATIM…RQRALDMGFL (220 aa)) enclose the Radical SAM core domain. The disordered stretch occupies residues 396-416 (GSGTAERTVDQTAATTDEATR). Positions 405–416 (DQTAATTDEATR) are enriched in polar residues.

This sequence belongs to the radical SAM superfamily. Lipoyl synthase family. Requires [4Fe-4S] cluster as cofactor.

The protein resides in the mitochondrion. The catalysed reaction is [[Fe-S] cluster scaffold protein carrying a second [4Fe-4S](2+) cluster] + N(6)-octanoyl-L-lysyl-[protein] + 2 oxidized [2Fe-2S]-[ferredoxin] + 2 S-adenosyl-L-methionine + 4 H(+) = [[Fe-S] cluster scaffold protein] + N(6)-[(R)-dihydrolipoyl]-L-lysyl-[protein] + 4 Fe(3+) + 2 hydrogen sulfide + 2 5'-deoxyadenosine + 2 L-methionine + 2 reduced [2Fe-2S]-[ferredoxin]. It participates in protein modification; protein lipoylation via endogenous pathway; protein N(6)-(lipoyl)lysine from octanoyl-[acyl-carrier-protein]: step 2/2. Functionally, catalyzes the radical-mediated insertion of two sulfur atoms into the C-6 and C-8 positions of the octanoyl moiety bound to the lipoyl domains of lipoate-dependent enzymes, thereby converting the octanoylated domains into lipoylated derivatives. The polypeptide is Lipoyl synthase, mitochondrial (Penicillium rubens (strain ATCC 28089 / DSM 1075 / NRRL 1951 / Wisconsin 54-1255) (Penicillium chrysogenum)).